A 719-amino-acid polypeptide reads, in one-letter code: Leucine-rich repeat and fibronectin type-III domain-containing protein 5 (719 aa).

The N-terminal stretch at 1-17 is a signal peptide; that stretch reads MEKFLFYLFLIGIAVRA. An LRRNT domain is found at 18–51; it reads QICPKRCVCQILSPNLATLCAKKGLLFVPPNIDR. Over 18 to 529 the chain is Extracellular; sequence QICPKRCVCQ…MQSQFLGGTM (512 aa). 7 LRR repeats span residues 52-73, 76-97, 100-121, 124-145, 148-169, 172-193, and 196-217; these read RTVE…DFAN, SLVD…AFAD, NLRA…MFSG, NLHH…AFDD, ALEE…AVEK, SLHT…TFSH, and KMTR…PLFQ. Asn73 carries N-linked (GlcNAc...) asparagine glycosylation. The region spanning 240-286 is the LRRCT domain; it reads NPLHCNCELLWLRRLSREDDLETCASPALLTGRYFWSIPEEEFLCEP. The Ig-like domain maps to 287 to 373; it reads PLITRHTHEM…GEATQTVDLH (87 aa). Residues Cys308 and Cys357 are joined by a disulfide bond. Asn330, Asn339, Asn382, Asn406, and Asn452 each carry an N-linked (GlcNAc...) asparagine glycan. The tract at residues 385-416 is disordered; that stretch reads NHIHEPDPGSSDISTSTKSGSNASSSNGDTKM. The segment covering 393-412 has biased composition (low complexity); it reads GSSDISTSTKSGSNASSSNG. A Fibronectin type-III domain is found at 414-503; sequence TKMSQDKIVV…ITSLTATRVV (90 aa). A helical membrane pass occupies residues 530-550; that stretch reads IIIIGGIIVASVLVFIIILMI. Over 551-719 the chain is Cytoplasmic; sequence RYKVCNNNGQ…VQETQRLESI (169 aa). Low complexity predominate over residues 614 to 627; it reads SETCSSQDSSTTTS. Positions 614–719 are disordered; that stretch reads SETCSSQDSS…VQETQRLESI (106 aa). Composition is skewed to polar residues over residues 628-641, 654-677, and 702-713; these read ALPP…PVSQ, EPQS…TALQ, and LLTNVDQNVQET.

This sequence belongs to the LRFN family. Can form heteromeric complexes with LRFN1, LRFN2, LRFN3 and LFRN4. Able to form homomeric complexes across cell junctions, between adjacent cells. Does not interact with DLG1, DLG2 or DLG3. Does not interact with DLG4. Post-translationally, glycosylated. As to expression, predominantly expressed in the brain, with a weak, but broad expression in the cerebral cortex and diencephalic nuclei. Strongly expressed in both the pyramidal layer and the dentate gyrus of the hippocampus. Also detected in other parts of the central nervous system, including the olfactory bulb, pons, cerebellum, and medulla oblongata, as well as in the peripheral nervous system, such as the ganglia of cranial nerves and the dorsal root ganglion during gestation.

The protein resides in the membrane. Functionally, cell adhesion molecule that mediates homophilic cell-cell adhesion in a Ca(2+)-independent manner. Promotes neurite outgrowth in hippocampal neurons. In Mus musculus (Mouse), this protein is Leucine-rich repeat and fibronectin type-III domain-containing protein 5 (Lrfn5).